Reading from the N-terminus, the 114-residue chain is Ribosome-binding factor A (114 aa).

Belongs to the RbfA family. In terms of assembly, monomer. Binds 30S ribosomal subunits, but not 50S ribosomal subunits or 70S ribosomes.

It localises to the cytoplasm. In terms of biological role, one of several proteins that assist in the late maturation steps of the functional core of the 30S ribosomal subunit. Associates with free 30S ribosomal subunits (but not with 30S subunits that are part of 70S ribosomes or polysomes). Required for efficient processing of 16S rRNA. May interact with the 5'-terminal helix region of 16S rRNA. The protein is Ribosome-binding factor A of Listeria monocytogenes serotype 4b (strain F2365).